The primary structure comprises 78 residues: Gas vesicle protein A (78 aa).

The alpha helix 1 stretch occupies residues 9-19 (LAEVLDRVLDK). Positions 23-31 (VDVWARISL) are beta-strand 1. Residues 32–34 (VGI) form a beta turn region. A beta-strand 2 region spans residues 35 to 43 (EILTVEARV). Residues 48-67 (VDTFLHYAEEIAKIEQAELT) are alpha helix 2.

It belongs to the gas vesicle GvpA family. In terms of assembly, the gas vesicle shell is 2 nm thick and consists of a single layer of this protein. It forms helical ribs nearly perpendicular to the long axis of the vesicle. Modeled as antiparallel homodimers.

The protein resides in the gas vesicle shell. In terms of biological role, gas vesicles are hollow, gas filled proteinaceous nanostructures found in some microorganisms. During planktonic growth they allow positioning of the organism at a favorable depth for light or nutrient acquisition. GvpA forms the protein shell. This gene replaces p-gvpA of H.salinarum very poorly, only about 1% of GVs are formed; the few gas vesicles formed are quite strong with a very high critical collapse pressure (CCP) of 0.213 MPa. Functionally, expression of a 9.5 kb mc-vac DNA fragment containing 2 divergently transcribed regions (gvpD-gvpE-gvpF-gvpG-gvpH-gvpI-gvpJ-gvpK-gvpL-gvpM and gvpA-gvpC-gvpN-gvpO) allows H.volcanii to produce gas vesicles. The sequence is that of Gas vesicle protein A from Haloferax mediterranei (strain ATCC 33500 / DSM 1411 / JCM 8866 / NBRC 14739 / NCIMB 2177 / R-4) (Halobacterium mediterranei).